The chain runs to 212 residues: 2,3-bisphosphoglycerate-dependent phosphoglycerate mutase (212 aa).

Substrate-binding positions include 9-16, 22-23, Arg61, 88-91, Lys99, 115-116, and 159-160; these read RHGQSEWN, TG, ERDY, RR, and GN. His10 functions as the Tele-phosphohistidine intermediate in the catalytic mechanism. The Proton donor/acceptor role is filled by Glu88.

This sequence belongs to the phosphoglycerate mutase family. BPG-dependent PGAM subfamily. Homodimer.

The enzyme catalyses (2R)-2-phosphoglycerate = (2R)-3-phosphoglycerate. Its pathway is carbohydrate degradation; glycolysis; pyruvate from D-glyceraldehyde 3-phosphate: step 3/5. In terms of biological role, catalyzes the interconversion of 2-phosphoglycerate and 3-phosphoglycerate. The protein is 2,3-bisphosphoglycerate-dependent phosphoglycerate mutase of Methylobacterium radiotolerans (strain ATCC 27329 / DSM 1819 / JCM 2831 / NBRC 15690 / NCIMB 10815 / 0-1).